Consider the following 945-residue polypeptide: Valine--tRNA ligase (945 aa).

Residues 42 to 52 carry the 'HIGH' region motif; the sequence is PNVTGTLHMGH. Positions 552–556 match the 'KMSKS' region motif; sequence KMSKS. ATP is bound at residue Lys-555. Positions 879-945 form a coiled coil; the sequence is DKATETARLS…VQTQLSKLKD (67 aa).

The protein belongs to the class-I aminoacyl-tRNA synthetase family. ValS type 1 subfamily. Monomer.

The protein resides in the cytoplasm. It carries out the reaction tRNA(Val) + L-valine + ATP = L-valyl-tRNA(Val) + AMP + diphosphate. Catalyzes the attachment of valine to tRNA(Val). As ValRS can inadvertently accommodate and process structurally similar amino acids such as threonine, to avoid such errors, it has a 'posttransfer' editing activity that hydrolyzes mischarged Thr-tRNA(Val) in a tRNA-dependent manner. The chain is Valine--tRNA ligase from Neisseria meningitidis serogroup A / serotype 4A (strain DSM 15465 / Z2491).